Reading from the N-terminus, the 454-residue chain is tRNA modification GTPase MnmE (454 aa).

Arg23, Glu80, and Lys120 together coordinate (6S)-5-formyl-5,6,7,8-tetrahydrofolate. The TrmE-type G domain occupies 216–377; that stretch reads GMKVVIAGRP…LRNHLKQSMG (162 aa). Asn226 contributes to the K(+) binding site. GTP-binding positions include 226 to 231, 245 to 251, 270 to 273, 335 to 338, and 358 to 360; these read NAGKSS, TDIAGTT, DTAG, NKAD, and SAR. Ser230 contributes to the Mg(2+) binding site. The K(+) site is built by Thr245, Ile247, and Thr250. Thr251 is a binding site for Mg(2+). Residue Lys454 participates in (6S)-5-formyl-5,6,7,8-tetrahydrofolate binding.

It belongs to the TRAFAC class TrmE-Era-EngA-EngB-Septin-like GTPase superfamily. TrmE GTPase family. In terms of assembly, homodimer. Heterotetramer of two MnmE and two MnmG subunits. K(+) serves as cofactor.

It localises to the cytoplasm. In terms of biological role, exhibits a very high intrinsic GTPase hydrolysis rate. Involved in the addition of a carboxymethylaminomethyl (cmnm) group at the wobble position (U34) of certain tRNAs, forming tRNA-cmnm(5)s(2)U34. The chain is tRNA modification GTPase MnmE from Salmonella typhimurium (strain LT2 / SGSC1412 / ATCC 700720).